The following is an 838-amino-acid chain: Protein kintoun (838 aa).

5 disordered regions span residues 106–125 (RPKN…LNWS), 212–238 (NPTA…GKPE), 370–411 (LRHF…TSSP), 557–696 (NAPL…DSCS), and 776–838 (QQRR…EMDD). Polar residues predominate over residues 114-125 (DPSSGSRGLNWS). A compositionally biased stretch (basic and acidic residues) spans 370-380 (LRHFSREDSGV). Serine 378 bears the Phosphoserine mark. Residues 389–398 (PVEEDPDGEL) show a composition bias toward acidic residues. A compositionally biased stretch (basic and acidic residues) spans 557–572 (NAPLDVEFERNQEGHA). Acidic residues predominate over residues 583–592 (EEEEEEEDKE). The span at 601–611 (DQQQQQQVQNK) shows a compositional bias: low complexity. 2 stretches are compositionally biased toward basic residues: residues 612-623 (KSGKKQRKRNKK) and 673-683 (RSHRGILKRFS). Serine 781 is subject to Phosphoserine. The segment covering 789-802 (EETRGSALKQKENP) has biased composition (basic and acidic residues).

It belongs to the PIH1 family. Kintoun subfamily. As to quaternary structure, interacts with Pp1alpha-96A, Pp1-87B, Pp1-13C and flw.

Its subcellular location is the cytoplasm. Functionally, required for cytoplasmic pre-assembly of axonemal dyneins, thereby playing a central role in motility in cilia and flagella. Involved in pre-assembly of dynein arm complexes in the cytoplasm before intraflagellar transport loads them for the ciliary compartment. In Drosophila sechellia (Fruit fly), this protein is Protein kintoun.